Consider the following 1424-residue polypeptide: DNA-directed RNA polymerase subunit beta' (1424 aa).

Zn(2+) contacts are provided by C60, C62, C75, and C78. Mg(2+) contacts are provided by D449, D451, and D453. Zn(2+) contacts are provided by C783, C857, C864, and C867.

It belongs to the RNA polymerase beta' chain family. As to quaternary structure, the RNAP catalytic core consists of 2 alpha, 1 beta, 1 beta' and 1 omega subunit. When a sigma factor is associated with the core the holoenzyme is formed, which can initiate transcription. Mg(2+) serves as cofactor. Requires Zn(2+) as cofactor.

It catalyses the reaction RNA(n) + a ribonucleoside 5'-triphosphate = RNA(n+1) + diphosphate. Its function is as follows. DNA-dependent RNA polymerase catalyzes the transcription of DNA into RNA using the four ribonucleoside triphosphates as substrates. This is DNA-directed RNA polymerase subunit beta' from Treponema denticola (strain ATCC 35405 / DSM 14222 / CIP 103919 / JCM 8153 / KCTC 15104).